The chain runs to 523 residues: MILHTYIILSLLTIFPKAIGLSLQMPMALEASYASLVEKATLAVGQEIDAIQKGIQQGWLEVETRFPTIVSQLSYSTGPKFAIKKKDATFWDFYVESQELPNYRLRVKRNNPEVLKVDFTKQYSGYLDVEADDKHFFYWFFESRNDPQNDPIILWLNGGPGCSSLTGLFFELGSSRINENLKPIFNPYSWNGNASIIYLDQPVNVGFSYSSSSVSNTVVAGEDVYAFLQLFFQHFPEYQTNDFHIAGESYAGHYIPVFADEILSQKNRNFNLTSVLIGNGLTDPLTQYRYYEPMACGEGGAPSVLPADECENMLVTQDKCLSLIQACYDSQSAFTCAPAAIYCNNAQMGPYQRTGKNVYDIRKECDGGSLCYKDLEFIDTYLNQKFVQDALGAEVDTYESCNFEINRNFLFAGDWMKPYHEHVSSLLNKGLPVLIYAGDKDFICNWLGNRAWTDVLPWVDADGFEKAEVQDWLVNGRKAGEFKNYSNFTYLRVYDAGHMAPYDQPENSHEMVNRWISGDFSFH.

The first 20 residues, 1–20, serve as a signal peptide directing secretion; the sequence is MILHTYIILSLLTIFPKAIG. The propeptide occupies 21 to 107; sequence LSLQMPMALE…QELPNYRLRV (87 aa). 5 disulfides stabilise this stretch: cysteine 162–cysteine 401, cysteine 296–cysteine 310, cysteine 320–cysteine 343, cysteine 327–cysteine 336, and cysteine 365–cysteine 371. N-linked (GlcNAc...) asparagine glycosylation is present at asparagine 193. Residue serine 249 is part of the active site. An N-linked (GlcNAc...) asparagine glycan is attached at asparagine 271. Aspartate 441 is an active-site residue. N-linked (GlcNAc...) asparagine glycosylation is found at asparagine 484 and asparagine 487. Residue histidine 498 is part of the active site.

Belongs to the peptidase S10 family.

It localises to the vacuole. It carries out the reaction Release of a C-terminal amino acid with broad specificity.. Functionally, involved in degradation of small peptides. The chain is Carboxypeptidase Y (PRC1) from Komagataella phaffii (strain GS115 / ATCC 20864) (Yeast).